The following is a 369-amino-acid chain: D-alanine--D-alanine ligase (369 aa).

One can recognise an ATP-grasp domain in the interval 152–359 (KKLFAAEGLP…YPSLLATMVE (208 aa)). Position 180-235 (180-235 (RERLGLPVFVKPARGGSSIGVSRVSSWDELDAAVAAARDHDPKVIVEAAIAGRELE)) interacts with ATP. 3 residues coordinate Mg(2+): Asp314, Glu326, and Asn328.

It belongs to the D-alanine--D-alanine ligase family. Mg(2+) is required as a cofactor. Mn(2+) serves as cofactor.

It is found in the cytoplasm. The enzyme catalyses 2 D-alanine + ATP = D-alanyl-D-alanine + ADP + phosphate + H(+). It participates in cell wall biogenesis; peptidoglycan biosynthesis. Functionally, cell wall formation. This is D-alanine--D-alanine ligase from Mycobacterium avium (strain 104).